Reading from the N-terminus, the 450-residue chain is F-box protein KIB3 (450 aa).

One can recognise an F-box domain in the interval 20 to 50 (DLVRLILERLSFVDFHRARCVSSTWYVASKS).

It is found in the cytoplasm. The protein localises to the nucleus. Its subcellular location is the nucleolus. Its function is as follows. Component of SCF(ASK-cullin-F-box) E3 ubiquitin ligase complexes, which may mediate the ubiquitination and subsequent proteasomal degradation of target proteins. Required for brassinosteroid (BR) signal transduction. Mediates ASK7/BIN2/SK21 inactivation both by competing with substrate binding (e.g. BZR1) and by promoting its ubiquitination and subsequent proteasomal degradation. This Arabidopsis thaliana (Mouse-ear cress) protein is F-box protein KIB3.